Here is a 322-residue protein sequence, read N- to C-terminus: MDTSSINAQSIFDDNAATLKLSWLTGHEGWERGFSADTVGNATSSADLVGHLNLIHPNRIQVLGEAEIDYYQRQTDEDRSRHMAELIALEPPFLVVAGGAAAPPELVLRCTRSSTPLFTTPMSAAAVIDSLRLYMSRILAPRATLHGVFIDILGMGVLLTGDSGLGKSELGLELISRGHGLVADDAVDFVRLGPDFVEGRCPPLLQNLLEVRGLGLLDIKTIFGETAVRRKMKLKLIVQLVRRPDGEFQRLPLESQTVDVLGLPISKVTIQVAAGRNLAVLVEAAVRNTILQLRGIDTLRDFMDRQRLAMQDPDSQFPGKLV.

Catalysis depends on residues His-146 and Lys-167. Position 161-168 (161-168 (GDSGLGKS)) interacts with ATP. Ser-168 is a Mg(2+) binding site. The active-site Proton acceptor; for phosphorylation activity. Proton donor; for dephosphorylation activity is the Asp-185. The interval 209-218 (LEVRGLGLLD) is important for the catalytic mechanism of both phosphorylation and dephosphorylation. Glu-210 is a Mg(2+) binding site. The active site involves Arg-250. Positions 271 to 276 (QVAAGR) are important for the catalytic mechanism of dephosphorylation.

Belongs to the HPrK/P family. In terms of assembly, homohexamer. It depends on Mg(2+) as a cofactor.

It carries out the reaction [HPr protein]-L-serine + ATP = [HPr protein]-O-phospho-L-serine + ADP + H(+). The enzyme catalyses [HPr protein]-O-phospho-L-serine + phosphate + H(+) = [HPr protein]-L-serine + diphosphate. In terms of biological role, catalyzes the ATP- as well as the pyrophosphate-dependent phosphorylation of a specific serine residue in HPr, a phosphocarrier protein of the phosphoenolpyruvate-dependent sugar phosphotransferase system (PTS). HprK/P also catalyzes the pyrophosphate-producing, inorganic phosphate-dependent dephosphorylation (phosphorolysis) of seryl-phosphorylated HPr (P-Ser-HPr). The protein is HPr kinase/phosphorylase of Burkholderia lata (strain ATCC 17760 / DSM 23089 / LMG 22485 / NCIMB 9086 / R18194 / 383).